The following is a 471-amino-acid chain: Trigger factor (471 aa).

A PPIase FKBP-type domain is found at 174–261 (GDVAVVSFEG…VKDLKTRELP (88 aa)). Over residues 436-446 (ETLPKTKSLNG) the composition is skewed to polar residues. The tract at residues 436–471 (ETLPKTKSLNGKPSTQGKTSQSKSKKTKTKVEKTTK) is disordered. Over residues 447 to 457 (KPSTQGKTSQS) the composition is skewed to low complexity.

It belongs to the FKBP-type PPIase family. Tig subfamily.

It localises to the cytoplasm. It catalyses the reaction [protein]-peptidylproline (omega=180) = [protein]-peptidylproline (omega=0). In terms of biological role, involved in protein export. Acts as a chaperone by maintaining the newly synthesized protein in an open conformation. Functions as a peptidyl-prolyl cis-trans isomerase. This is Trigger factor from Prochlorococcus marinus (strain MIT 9211).